The chain runs to 187 residues: TATA-box-binding protein (187 aa).

Tandem repeats lie at residues 10-86 and 101-179.

It belongs to the TBP family.

General factor that plays a role in the activation of archaeal genes transcribed by RNA polymerase. Binds specifically to the TATA box promoter element which lies close to the position of transcription initiation. This Natronomonas pharaonis (strain ATCC 35678 / DSM 2160 / CIP 103997 / JCM 8858 / NBRC 14720 / NCIMB 2260 / Gabara) (Halobacterium pharaonis) protein is TATA-box-binding protein.